Here is a 739-residue protein sequence, read N- to C-terminus: Poly(A) polymerase gamma (739 aa).

Position 2 is an N6-acetyllysine (Lys-2). The residue at position 23 (Ser-23) is a Phosphoserine. ATP-binding positions include 99–101 (FGS), Thr-108, 112–114 (DID), Asp-166, Lys-227, Tyr-236, and 245–246 (GV). Mg(2+)-binding residues include Asp-112, Asp-114, and Asp-166. A disordered region spans residues 506–566 (KSLSDVSRSS…PTGEIERSSA (61 aa)). Polar residues-rich tracts occupy residues 509-531 (SDVS…TCLD) and 538-556 (SGTP…NPDS). Position 524 is a phosphoserine (Ser-524). A phosphoserine mark is found at Ser-602 and Ser-651. Residue Thr-657 is modified to Phosphothreonine. Residues 677–688 (SRAAEDRKRKPM) are compositionally biased toward basic and acidic residues. The interval 677–725 (SRAAEDRKRKPMDSIGGESMPIPTIDTARKKRLPSKELPDSSSPVPANN) is disordered. Ser-711 carries the post-translational modification Phosphoserine.

This sequence belongs to the poly(A) polymerase family. Requires Mg(2+) as cofactor. The cofactor is Mn(2+).

Its subcellular location is the nucleus. It catalyses the reaction RNA(n) + ATP = RNA(n)-3'-adenine ribonucleotide + diphosphate. In terms of biological role, responsible for the post-transcriptional adenylation of the 3'-terminal of mRNA precursors and several small RNAs including signal recognition particle (SRP) RNA, nuclear 7SK RNA, U2 small nuclear RNA, and ribosomal 5S RNA. This chain is Poly(A) polymerase gamma (Papolg), found in Mus musculus (Mouse).